The chain runs to 280 residues: uncharacterized protein (280 aa).

Disordered regions lie at residues 1-124 (MPRD…QREA) and 177-280 (LEEE…LSSK). Basic residues-rich tracts occupy residues 16-36 (SRRR…RSRR) and 48-83 (YSRR…RQKS). 2 stretches are compositionally biased toward basic and acidic residues: residues 102–124 (AKNR…QREA) and 182–259 (EASL…ERLK).

This is an uncharacterized protein from Arabidopsis thaliana (Mouse-ear cress).